We begin with the raw amino-acid sequence, 979 residues long: Chromosome partition protein Smc (979 aa).

33–40 (PNGSGKSN) is an ATP binding site. Residues 169 to 400 (SKYKLDKEEA…INILKQQFEN (232 aa)) are a coiled coil. Residues 419 to 538 (DGYIGLASEL…DNVDNANRIA (120 aa)) form the SMC hinge domain. Coiled-coil stretches lie at residues 572 to 716 (ILNY…HSDS) and 750 to 818 (SLDL…DKII).

Belongs to the SMC family. Homodimer.

The protein resides in the cytoplasm. In terms of biological role, required for chromosome condensation and partitioning. This chain is Chromosome partition protein Smc, found in Mesomycoplasma hyorhinis (Mycoplasma hyorhinis).